Reading from the N-terminus, the 315-residue chain is Olfactory receptor 3A2 (315 aa).

The Extracellular portion of the chain corresponds to Met-1 to Val-29. A glycan (N-linked (GlcNAc...) asparagine) is linked at Asn-8. A helical membrane pass occupies residues Val-30 to Ile-52. Residues Leu-53–Ala-60 lie on the Cytoplasmic side of the membrane. A helical membrane pass occupies residues Pro-61–Pro-82. Residues Ala-83–Gln-103 are Extracellular-facing. A disulfide bridge connects residues Cys-100 and Cys-192. Residues Leu-104–Tyr-123 form a helical membrane-spanning segment. Topologically, residues Asp-124–Val-143 are cytoplasmic. The chain crosses the membrane as a helical span at residues Gln-144–Thr-161. Topologically, residues His-162 to Glu-199 are extracellular. The helical transmembrane segment at Leu-200–His-223 threads the bilayer. Topologically, residues Val-224 to Ala-240 are cytoplasmic. The helical transmembrane segment at Phe-241–Arg-264 threads the bilayer. At Leu-265–Lys-275 the chain is on the extracellular side. Residues Gly-276–Leu-295 traverse the membrane as a helical segment. At Arg-296–Thr-315 the chain is on the cytoplasmic side.

This sequence belongs to the G-protein coupled receptor 1 family.

The protein localises to the cell membrane. In terms of biological role, odorant receptor. The polypeptide is Olfactory receptor 3A2 (OR3A2) (Pan troglodytes (Chimpanzee)).